The primary structure comprises 191 residues: GTP cyclohydrolase 1 (191 aa).

Cys80, His83, and Cys151 together coordinate Zn(2+).

It belongs to the GTP cyclohydrolase I family. In terms of assembly, toroid-shaped homodecamer, composed of two pentamers of five dimers.

The enzyme catalyses GTP + H2O = 7,8-dihydroneopterin 3'-triphosphate + formate + H(+). The protein operates within cofactor biosynthesis; 7,8-dihydroneopterin triphosphate biosynthesis; 7,8-dihydroneopterin triphosphate from GTP: step 1/1. This Leifsonia xyli subsp. xyli (strain CTCB07) protein is GTP cyclohydrolase 1.